The chain runs to 105 residues: Small ribosomal subunit protein uS10 (105 aa).

This sequence belongs to the universal ribosomal protein uS10 family. In terms of assembly, part of the 30S ribosomal subunit.

Functionally, involved in the binding of tRNA to the ribosomes. This is Small ribosomal subunit protein uS10 from Legionella pneumophila (strain Paris).